The sequence spans 200 residues: Recoverin (200 aa).

Gly-2 is lipidated: N-myristoyl glycine. EF-hand domains follow at residues 25–60 (EEEL…FPDT), 61–96 (DPKA…TTAG), 97–132 (KTNQ…IFKM), and 147–182 (TPEK…NKEI). Cys-39 is modified (cysteine sulfenic acid (-SOH)). The Ca(2+) site is built by Asp-74, Asn-76, Asp-78, Thr-80, Glu-85, Asp-110, Asp-112, Asn-114, Thr-116, and Glu-121. Positions 189 to 192 (EPQK) are interaction with GRK1.

Belongs to the recoverin family. In terms of assembly, homodimer; disulfide-linked. Homodimerization is caused by prolonged intense illumination. May form a complex composed of RHO, GRK1 and RCVRN in a Ca(2+)-dependent manner; RCVRN prevents the interaction between GRK1 and RHO. Interacts (via C-terminus) with GRK1 (via N-terminus); the interaction is Ca(2+)-dependent. The N-terminal glycine is linked to one of four different types of acyl groups. The most abundant is myristoleate (14:1), but 14:0, 14:2, and 12:0 acyl residues are also present. The Ca(2+) induced exposure of the myristoyl group, known as the calcium-myristoyl switch, promotes RCVRN binding to the photoreceptor cell membranes only when intracellular Ca(2+) concentration is high. In terms of processing, oxidation on Cys-39 occurs in response to prolonged intense illumination and results in the formation of disulfide homodimers, and to a lesser extent disulfide-linked heterodimers. Retina and pineal gland.

The protein localises to the photoreceptor inner segment. Its subcellular location is the cell projection. The protein resides in the cilium. It localises to the photoreceptor outer segment. It is found in the photoreceptor outer segment membrane. The protein localises to the perikaryon. In terms of biological role, acts as a calcium sensor and regulates phototransduction of cone and rod photoreceptor cells. Modulates light sensitivity of cone photoreceptor in dark and dim conditions. In response to high Ca(2+) levels induced by low light levels, prolongs RHO/rhodopsin activation in rod photoreceptor cells by binding to and inhibiting GRK1-mediated phosphorylation of RHO/rhodopsin. Plays a role in scotopic vision/enhances vision in dim light by enhancing signal transfer between rod photoreceptors and rod bipolar cells. Improves rod photoreceptor sensitivity in dim light and mediates response of rod photoreceptors to facilitate detection of change and motion in bright light. This Homo sapiens (Human) protein is Recoverin (RCVRN).